Here is a 434-residue protein sequence, read N- to C-terminus: MDYLDLGPYSSASGTVRLPGSKSISNRVLLLAALAEGETTITNLLDSDDTRVMLDALGKLGVKLARDGDTCVVTGTRGAFTAKTADLFLGNAGTAVRPLTAALAVNGGDYRVHGVPRMHERPIGDLVDGLRQIGAQIDYELSEGYPPLRIKPATISVDAPIRVRGDVSSQFLTALLMTLPLVKAKDGQAVVEVDGELISKPYVDITIRLMARFGVTVERDGWQRFVVPAGVRYRSPGRIMVEGDASSASYFLAAGALGGGPLRVEGVGRASIQGDVGFANALMQMGANVTMGDDWIDVRGIGHDRGKLEPIDMDFNLIPDAAMTIAVAALFANGTSTLRNIASWRVKETDRIAAMATELRKVGAIVEEGPDYLVVTPPEKLTPNAAIDTYDDHRMAMCFSLVSLGGVPVRINDPKCVGKTFPDYFDRFAALAKA.

The 3-phosphoshikimate site is built by Lys-22, Ser-23, and Arg-27. Lys-22 lines the phosphoenolpyruvate pocket. 2 residues coordinate phosphoenolpyruvate: Gly-93 and Arg-121. Ser-168, Ser-169, Gln-170, Ser-199, Asp-320, and Lys-347 together coordinate 3-phosphoshikimate. Residue Gln-170 participates in phosphoenolpyruvate binding. Asp-320 functions as the Proton acceptor in the catalytic mechanism. The phosphoenolpyruvate site is built by Arg-351, Arg-394, and Lys-419.

The protein belongs to the EPSP synthase family. In terms of assembly, monomer.

It localises to the cytoplasm. It catalyses the reaction 3-phosphoshikimate + phosphoenolpyruvate = 5-O-(1-carboxyvinyl)-3-phosphoshikimate + phosphate. Its pathway is metabolic intermediate biosynthesis; chorismate biosynthesis; chorismate from D-erythrose 4-phosphate and phosphoenolpyruvate: step 6/7. Its function is as follows. Catalyzes the transfer of the enolpyruvyl moiety of phosphoenolpyruvate (PEP) to the 5-hydroxyl of shikimate-3-phosphate (S3P) to produce enolpyruvyl shikimate-3-phosphate and inorganic phosphate. The polypeptide is 3-phosphoshikimate 1-carboxyvinyltransferase (Burkholderia orbicola (strain AU 1054)).